The following is a 213-amino-acid chain: MSDNNQCVIVGIAGASASGKSLIASTIYNELREKVGDHQIGVITEDCYYNDQSQLSMEERVKTNYDHPSALDHDLLCEHLEKLVRGEAVEVPEYSYTEHTRTSNTTPMTPKKVIILEGILLLTDPRLRDLMHATVFMDTPLDICLLRRVKRDVEERGRTMESVLKQYQQTVRPMFMQFIEPSKQYADIIVPRGGKNRIAIDVLKAHIAKLLKA.

14–21 is an ATP binding site; it reads GASASGKS.

The protein belongs to the uridine kinase family.

Its subcellular location is the cytoplasm. The enzyme catalyses uridine + ATP = UMP + ADP + H(+). It catalyses the reaction cytidine + ATP = CMP + ADP + H(+). Its pathway is pyrimidine metabolism; CTP biosynthesis via salvage pathway; CTP from cytidine: step 1/3. It participates in pyrimidine metabolism; UMP biosynthesis via salvage pathway; UMP from uridine: step 1/1. This is Uridine kinase from Vibrio campbellii (strain ATCC BAA-1116).